A 72-amino-acid chain; its full sequence is U-actitoxin-Aeq5b (72 aa).

An N-terminal signal peptide occupies residues 1–20; it reads MNQVMTIFLVLGVIVYSVES. 4 disulfides stabilise this stretch: Cys33/Cys71, Cys37/Cys66, Cys44/Cys59, and Cys50/Cys56.

The protein belongs to the Acrorhagin I family. Expressed by acrorhagi.

It localises to the secreted. The protein localises to the nematocyst. Toxin that is lethal to crab. It interacts with divalent metal ions (zinc and nickel) suggesting it may function as a metal ion chelator to regulate metal ion levels or as a metal ion transporter, or that its function is modulated by metal ions. Is not active against any of the voltage-gated potassium and sodium channels tested. In addition, it does not show activity in bacterial and fungal growth inhibitory assays as well as in hemolytic assays. This Actinia equina (Beadlet anemone) protein is U-actitoxin-Aeq5b.